A 489-amino-acid polypeptide reads, in one-letter code: Probable cytosol aminopeptidase (489 aa).

2 residues coordinate Mn(2+): Lys-260 and Asp-265. Lys-272 is an active-site residue. Asp-283, Asp-342, and Glu-344 together coordinate Mn(2+). The active site involves Arg-346.

The protein belongs to the peptidase M17 family. The cofactor is Mn(2+).

It localises to the cytoplasm. It catalyses the reaction Release of an N-terminal amino acid, Xaa-|-Yaa-, in which Xaa is preferably Leu, but may be other amino acids including Pro although not Arg or Lys, and Yaa may be Pro. Amino acid amides and methyl esters are also readily hydrolyzed, but rates on arylamides are exceedingly low.. It carries out the reaction Release of an N-terminal amino acid, preferentially leucine, but not glutamic or aspartic acids.. Its function is as follows. Presumably involved in the processing and regular turnover of intracellular proteins. Catalyzes the removal of unsubstituted N-terminal amino acids from various peptides. The polypeptide is Probable cytosol aminopeptidase (Alcanivorax borkumensis (strain ATCC 700651 / DSM 11573 / NCIMB 13689 / SK2)).